Reading from the N-terminus, the 139-residue chain is Large ribosomal subunit protein uL16 (139 aa).

Residues 74-94 (LTKKPAETRQGSGKGSPESWV) form a disordered region.

The protein belongs to the universal ribosomal protein uL16 family. As to quaternary structure, part of the 50S ribosomal subunit.

Functionally, binds 23S rRNA and is also seen to make contacts with the A and possibly P site tRNAs. The polypeptide is Large ribosomal subunit protein uL16 (Saccharopolyspora erythraea (strain ATCC 11635 / DSM 40517 / JCM 4748 / NBRC 13426 / NCIMB 8594 / NRRL 2338)).